Reading from the N-terminus, the 90-residue chain is Hypnin-A3 (90 aa).

Its function is as follows. Lectin specific for core(alpha 1-6)fucosylated N-glycans. Inhibits platelet aggregation. The chain is Hypnin-A3 from Hypnea japonica (Japanese red alga).